The primary structure comprises 114 residues: Ribonuclease P protein component (114 aa).

This sequence belongs to the RnpA family. As to quaternary structure, consists of a catalytic RNA component (M1 or rnpB) and a protein subunit.

The catalysed reaction is Endonucleolytic cleavage of RNA, removing 5'-extranucleotides from tRNA precursor.. Functionally, RNaseP catalyzes the removal of the 5'-leader sequence from pre-tRNA to produce the mature 5'-terminus. It can also cleave other RNA substrates such as 4.5S RNA. The protein component plays an auxiliary but essential role in vivo by binding to the 5'-leader sequence and broadening the substrate specificity of the ribozyme. The protein is Ribonuclease P protein component of Borrelia duttonii (strain Ly).